The following is a 132-amino-acid chain: Ribosome-binding factor A (132 aa).

The protein belongs to the RbfA family. Monomer. Binds 30S ribosomal subunits, but not 50S ribosomal subunits or 70S ribosomes.

It is found in the cytoplasm. Functionally, one of several proteins that assist in the late maturation steps of the functional core of the 30S ribosomal subunit. Associates with free 30S ribosomal subunits (but not with 30S subunits that are part of 70S ribosomes or polysomes). Required for efficient processing of 16S rRNA. May interact with the 5'-terminal helix region of 16S rRNA. The polypeptide is Ribosome-binding factor A (Burkholderia cenocepacia (strain ATCC BAA-245 / DSM 16553 / LMG 16656 / NCTC 13227 / J2315 / CF5610) (Burkholderia cepacia (strain J2315))).